The following is a 273-amino-acid chain: Ethanolamine ammonia-lyase small subunit (273 aa).

Residues valine 164, glutamate 185, and cysteine 214 each coordinate adenosylcob(III)alamin.

Belongs to the EutC family. As to quaternary structure, the basic unit is a heterodimer which dimerizes to form tetramers. The heterotetramers trimerize; 6 large subunits form a core ring with 6 small subunits projecting outwards. Requires adenosylcob(III)alamin as cofactor.

The protein localises to the bacterial microcompartment. The catalysed reaction is ethanolamine = acetaldehyde + NH4(+). The protein operates within amine and polyamine degradation; ethanolamine degradation. Functionally, catalyzes the deamination of various vicinal amino-alcohols to oxo compounds. Allows this organism to utilize ethanolamine as the sole source of nitrogen and carbon in the presence of external vitamin B12. The protein is Ethanolamine ammonia-lyase small subunit of Pseudomonas paraeruginosa (strain DSM 24068 / PA7) (Pseudomonas aeruginosa (strain PA7)).